We begin with the raw amino-acid sequence, 38 residues long: Large ribosomal subunit protein bL36 (38 aa).

It belongs to the bacterial ribosomal protein bL36 family.

The protein is Large ribosomal subunit protein bL36 of Phytoplasma mali (strain AT).